The following is an 894-amino-acid chain: Translation initiation factor IF-2 (894 aa).

The tract at residues 47–305 is disordered; it reads AHLNRENGSG…GSALQQSFQK (259 aa). The span at 68–82 shows a compositional bias: polar residues; the sequence is STLNIPGTGGKSKSV. 2 stretches are compositionally biased toward basic and acidic residues: residues 93–159 and 166–219; these read VKRD…KDKV and DMTK…KWTD. Residues 254 to 269 are compositionally biased toward basic residues; sequence GRSRNAKAARPAKKGN. A compositionally biased stretch (basic and acidic residues) spans 270–283; that stretch reads KHSESKADREEARA. The region spanning 393-562 is the tr-type G domain; sequence PRAPVVTIMG…LLQAEVLELK (170 aa). A G1 region spans residues 402–409; sequence GHVDHGKT. 402-409 serves as a coordination point for GTP; the sequence is GHVDHGKT. The segment at 427–431 is G2; the sequence is GITQH. The segment at 448 to 451 is G3; it reads DTPG. Residues 448-452 and 502-505 contribute to the GTP site; these read DTPGH and NKID. Positions 502–505 are G4; it reads NKID. Residues 538 to 540 are G5; sequence SAK.

The protein belongs to the TRAFAC class translation factor GTPase superfamily. Classic translation factor GTPase family. IF-2 subfamily.

It localises to the cytoplasm. Functionally, one of the essential components for the initiation of protein synthesis. Protects formylmethionyl-tRNA from spontaneous hydrolysis and promotes its binding to the 30S ribosomal subunits. Also involved in the hydrolysis of GTP during the formation of the 70S ribosomal complex. This chain is Translation initiation factor IF-2, found in Citrobacter koseri (strain ATCC BAA-895 / CDC 4225-83 / SGSC4696).